Consider the following 119-residue polypeptide: Class I hydrophobin 2 (119 aa).

Residues 1 to 22 (MFARISTIITTLFFAMLAAATA) form the signal peptide. Cystine bridges form between Cys-36–Cys-97, Cys-45–Cys-91, Cys-46–Cys-79, and Cys-98–Cys-112.

It belongs to the fungal hydrophobin family. As to quaternary structure, self-assembles to form functional amyloid fibrils called rodlets. Self-assembly into fibrillar rodlets occurs spontaneously at hydrophobic:hydrophilic interfaces and the rodlets further associate laterally to form amphipathic monolayers.

The protein resides in the secreted. It is found in the cell wall. In terms of biological role, aerial growth, conidiation, and dispersal of filamentous fungi in the environment rely upon a capability of their secreting small amphipathic proteins called hydrophobins (HPBs) with low sequence identity. Class I can self-assemble into an outermost layer of rodlet bundles on aerial cell surfaces, conferring cellular hydrophobicity that supports fungal growth, development and dispersal; whereas Class II form highly ordered films at water-air interfaces through intermolecular interactions but contribute nothing to the rodlet structure. Abh2 is a class I hydrophobin involved in the emergence of aerial hyphae and strands. In Agaricus bisporus (White button mushroom), this protein is Class I hydrophobin 2.